The sequence spans 433 residues: Alpha-(1,3)-fucosyltransferase 4 (433 aa).

Topologically, residues 1–52 (MAPARQELQHESRCRPSRTVDAWRAAVATRGRHMETPGYRRRTRCGGWGLPR) are cytoplasmic. Residues 53 to 74 (SVSSLAAVGLLCTALTTFICWG) form a helical; Signal-anchor for type II membrane protein membrane-spanning segment. At 75–433 (QLPPLPWASP…IHNLADWFQR (359 aa)) the chain is on the lumenal side. Residues Asn-117 and Asn-218 are each glycosylated (N-linked (GlcNAc...) asparagine).

It belongs to the glycosyltransferase 10 family. As to expression, highest expression in stomach and colon. It is also expressed in the lung, testis, uterus, small intestine and to a lesser extent in spleen, and ovary. Present in trace amounts in brain, thymus, heart, smooth muscle, kidney and bone marrow. Not found in liver, salivary gland and pancreas.

The protein localises to the golgi apparatus. The protein resides in the golgi stack membrane. The catalysed reaction is a beta-D-galactosyl-(1-&gt;4)-N-acetyl-beta-D-glucosaminyl derivative + GDP-beta-L-fucose = a beta-D-galactosyl-(1-&gt;4)-[alpha-L-fucosyl-(1-&gt;3)]-N-acetyl-beta-D-glucosaminyl derivative + GDP + H(+). It catalyses the reaction an N-acetyl-alpha-neuraminyl-(2-&gt;3)-beta-D-galactosyl-(1-&gt;4)-N-acetyl-beta-D-glucosaminyl derivative + GDP-beta-L-fucose = an alpha-Neu5Ac-(2-&gt;3)-beta-D-Gal-(1-&gt;4)-[alpha-L-Fuc-(1-&gt;3)]-beta-D-GlcNAc derivative + GDP + H(+). The enzyme catalyses an alpha-Neu5Ac-(2-&gt;3)-beta-D-Gal-(1-&gt;4)-beta-D-GlcNAc-(1-&gt;3)-beta-D-Gal-(1-&gt;4)-beta-D-GlcNAc derivative + GDP-beta-L-fucose = an alpha-Neu5Ac-(2-&gt;3)-beta-D-Gal-(1-&gt;4)-beta-D-GlcNAc-(1-&gt;3)-beta-D-Gal-(1-&gt;4)-[alpha-L-Fuc-(1-&gt;3)]-beta-D-GlcNAc derivative + GDP + H(+). It carries out the reaction an alpha-Neu5Ac-(2-&gt;3)-beta-D-Gal-(1-&gt;4)-beta-D-GlcNAc6S derivative + GDP-beta-L-fucose = an alpha-Neu5Ac-(2-&gt;3)-beta-D-Gal-(1-&gt;4)-[alpha-L-Fuc-(1-&gt;3)]-beta-D-GlcNAc6S derivative + GDP + H(+). It functions in the pathway protein modification; protein glycosylation. Functionally, catalyzes alpha(1-&gt;3) linkage of fucosyl moiety transferred from GDP-beta-L-fucose to N-acetyl glucosamine (GlcNAc) within type 2 lactosamine (LacNAc, Gal-beta(1-&gt;4)GlcNAc) glycan attached to N- or O-linked glycoproteins. Robustly fucosylates nonsialylated distal LacNAc unit of the polylactosamine chain to form Lewis X antigen (CD15), a glycan determinant known to mediate important cellular functions in development and immunity. Fucosylates with lower efficiency sialylated LacNAc acceptors to form sialyl Lewis X and 6-sulfo sialyl Lewis X determinants that serve as recognition epitopes for C-type lectins. Together with FUT7 contributes to SELE, SELL and SELP selectin ligand biosynthesis and selectin-dependent lymphocyte homing, leukocyte migration and blood leukocyte homeostasis. In a cell type specific manner, may also fucosylate the internal LacNAc unit of the polylactosamine chain to form VIM-2 antigen that serves as recognition epitope for SELE. The sequence is that of Alpha-(1,3)-fucosyltransferase 4 (Fut4) from Mus musculus (Mouse).